The following is a 100-amino-acid chain: Enhancer of yellow 2 transcription factor (100 aa).

The protein belongs to the ENY2 family. In terms of assembly, component of the nuclear pore complex (NPC)-associated AMEX complex (anchoring and mRNA export complex), composed of at least e(y)2 and xmas-2. Component of the SAGA transcription coactivator-HAT complexes, at least composed of Ada2b, e(y)2, Pcaf/Gcn5, Taf10 and Nipped-A/Trrap. Within the SAGA complex, e(y)2, Sgf11, and not/nonstop form an additional subcomplex of SAGA called the DUB module (deubiquitination module). Component of the THO complex, composed of at least e(y)2, HPR1, THO2, THOC5, THOC6 and THOC7. Interacts with e(y)1. Interacts with su(Hw) (via zinc fingers). Interacts with xmas-2; required for localization to the nuclear periphery. Interacts with the nuclear pore complex (NPC).

The protein resides in the nucleus. It is found in the nucleoplasm. The protein localises to the cytoplasm. Functionally, involved in mRNA export coupled transcription activation by association with both the AMEX and the SAGA complexes. The SAGA complex is a multiprotein complex that activates transcription by remodeling chromatin and mediating histone acetylation and deubiquitination. Within the SAGA complex, participates in a subcomplex that specifically deubiquitinates histone H2B. The SAGA complex is recruited to specific gene promoters by activators, where it is required for transcription. Required for nuclear receptor-mediated transactivation. Involved in transcription elongation by recruiting the THO complex onto nascent mRNA. The AMEX complex functions in docking export-competent ribonucleoprotein particles (mRNPs) to the nuclear entrance of the nuclear pore complex (nuclear basket). AMEX participates in mRNA export and accurate chromatin positioning in the nucleus by tethering genes to the nuclear periphery. In Drosophila ananassae (Fruit fly), this protein is Enhancer of yellow 2 transcription factor.